Here is a 284-residue protein sequence, read N- to C-terminus: MPRYAQLVMGPAGSGKSTYCSTMVQHCEALNRSVQVVNLDPAAEHFNYPVMADIRELIEVDDVMEDDSLRFGPNGGLVFCMEYFANNFDWLENCLGHVEDDYILFDCPGQIELYTHLPVMKQLVQQLEQWEFRVCGVFLVDSQFMVESFKFISGILAALSAMISLEIPQVNIMTKMDLLSKKAKKEIEKFLDPDMYSLLEDSTGDLRSQKFKKLTKPVCGLVDDYSMVRFLPYDQSDEESMNIVLQHIDFAIQYGEDLEFKEPKEHEEESSSMFDEYFQERQNE.

A GTP-binding site is contributed by 13–18 (GSGKST). The Gly-Pro-Asn (GPN)-loop; involved in dimer interface motif lies at 72–74 (GPN). 174 to 177 (TKMD) contacts GTP. The segment at 261-284 (KEPKEHEEESSSMFDEYFQERQNE) is disordered.

The protein belongs to the GPN-loop GTPase family. Heterodimer with GPN1. Binds to RNA polymerase II (RNAPII). Interacts directly with subunits RPB4 and RPB7 and the CTD of RPB1.

Small GTPase required for proper localization of RNA polymerase II (RNAPII). May act at an RNAP assembly step prior to nuclear import. The chain is GPN-loop GTPase 3 from Rattus norvegicus (Rat).